An 843-amino-acid chain; its full sequence is DNA helicase MCM8 (843 aa).

Residues 1-23 (MSQGWRGGWSGGRGGNPYAGGWR) show a composition bias toward gly residues. Residues 1-52 (MSQGWRGGWSGGRGGNPYAGGWRGRPWRGRGQGGSWSRNSGRDPVCFSTAPP) form a disordered region. The MCM domain occupies 394–601 (LFQLIVNSLC…DHDHLLSEHV (208 aa)). 446-453 (GDPGLGKS) contributes to the ATP binding site.

The protein belongs to the MCM family. As to quaternary structure, component of the MCM8-MCM9 complex, which forms a hexamer composed of mcm8 and mcm9.

It localises to the nucleus. It catalyses the reaction ATP + H2O = ADP + phosphate + H(+). Functionally, component of the MCM8-MCM9 complex, a complex involved in homologous recombination repair following DNA interstrand cross-links and plays a key role during gametogenesis. The MCM8-MCM9 complex probably acts as a hexameric helicase required to process aberrant forks into homologous recombination substrates and to orchestrate homologous recombination with resection, fork stabilization and fork restart. In eggs, required for elongation during DNA replication by facilitating the recruitment of rpa2/rpa34 and stimulating the processivity of DNA polymerases at replication foci. Probably not required for DNA replication in other cells. In Xenopus tropicalis (Western clawed frog), this protein is DNA helicase MCM8 (mcm8).